A 397-amino-acid polypeptide reads, in one-letter code: Argininosuccinate synthase (397 aa).

An ATP-binding site is contributed by 8–16 (AYSGGLDTS). L-citrulline is bound at residue tyrosine 87. ATP is bound at residue glycine 117. Residues threonine 119, asparagine 123, and aspartate 124 each contribute to the L-aspartate site. Asparagine 123 is a binding site for L-citrulline. L-citrulline contacts are provided by arginine 127, serine 175, glutamate 259, and tyrosine 271.

Belongs to the argininosuccinate synthase family. Type 1 subfamily. In terms of assembly, homotetramer.

It localises to the cytoplasm. The enzyme catalyses L-citrulline + L-aspartate + ATP = 2-(N(omega)-L-arginino)succinate + AMP + diphosphate + H(+). Its pathway is amino-acid biosynthesis; L-arginine biosynthesis; L-arginine from L-ornithine and carbamoyl phosphate: step 2/3. The polypeptide is Argininosuccinate synthase (Streptomyces griseus subsp. griseus (strain JCM 4626 / CBS 651.72 / NBRC 13350 / KCC S-0626 / ISP 5235)).